We begin with the raw amino-acid sequence, 308 residues long: tRNA pseudouridine synthase B (308 aa).

The active-site Nucleophile is the Asp-44.

It belongs to the pseudouridine synthase TruB family. Type 1 subfamily.

It carries out the reaction uridine(55) in tRNA = pseudouridine(55) in tRNA. Responsible for synthesis of pseudouridine from uracil-55 in the psi GC loop of transfer RNAs. The chain is tRNA pseudouridine synthase B from Nitratidesulfovibrio vulgaris (strain DSM 19637 / Miyazaki F) (Desulfovibrio vulgaris).